Reading from the N-terminus, the 544-residue chain is Methionine--tRNA ligase (544 aa).

The short motif at 10-20 (PYANGSLHLGH) is the 'HIGH' region element. Positions 141, 144, 153, and 156 each coordinate Zn(2+). The 'KMSKS' region signature appears at 329–333 (KLSTS). Residue Thr332 coordinates ATP.

This sequence belongs to the class-I aminoacyl-tRNA synthetase family. MetG type 1 subfamily. Monomer. It depends on Zn(2+) as a cofactor.

It localises to the cytoplasm. It carries out the reaction tRNA(Met) + L-methionine + ATP = L-methionyl-tRNA(Met) + AMP + diphosphate. Functionally, is required not only for elongation of protein synthesis but also for the initiation of all mRNA translation through initiator tRNA(fMet) aminoacylation. The protein is Methionine--tRNA ligase of Bacillus cereus (strain Q1).